The following is a 451-amino-acid chain: Homeobox protein meis3-B (451 aa).

Residues His-33–Lys-64 form a disordered region. Polar residues predominate over residues His-34–Gly-43. The 84-residue stretch at Gly-102–Asp-185 folds into the MEIS N-terminal domain. The tract at residues Asn-206–Gly-272 is disordered. Positions Ser-218 to Gly-230 are enriched in low complexity. The segment covering Leu-231–Gln-242 has biased composition (polar residues). Positions Arg-267 to Met-329 form a DNA-binding region, homeobox.

The protein belongs to the TALE/MEIS homeobox family.

Its subcellular location is the nucleus. A caudalizing protein which is required to pattern the anterior/posterior (A/P) axis during central nervous system (CNS) formation. Inhibits anterior neural expression and acts as a transcriptional activator to induce posterior neural gene expression. Maintains a proper A/P balance required for hindbrain formation by activating the FGF/MAPK pathway, which modulates the planar cell polarity (PCP) pathway. Interacts with retinoid signaling during hindbrain patterning. The sequence is that of Homeobox protein meis3-B (meis3-b) from Xenopus laevis (African clawed frog).